The chain runs to 138 residues: Ribulose bisphosphate carboxylase small subunit (138 aa).

It belongs to the RuBisCO small chain family. In terms of assembly, heterohexadecamer of 8 large and 8 small subunits.

Its subcellular location is the plastid. It localises to the chloroplast. In terms of biological role, ruBisCO catalyzes two reactions: the carboxylation of D-ribulose 1,5-bisphosphate, the primary event in carbon dioxide fixation, as well as the oxidative fragmentation of the pentose substrate in the photorespiration process. Both reactions occur simultaneously and in competition at the same active site. Although the small subunit is not catalytic it is essential for maximal activity. The polypeptide is Ribulose bisphosphate carboxylase small subunit (Cyanidium caldarium (Red alga)).